The sequence spans 176 residues: Probable DNA-directed RNA polymerase subunit delta (176 aa).

Residues Leu14–Trp81 form the HTH HARE-type domain. Disordered stretches follow at residues Val91–Asp119 and Asp140–Lys176. Composition is skewed to acidic residues over residues Asp105 to Asp119 and Thr159 to Lys176.

The protein belongs to the RpoE family. In terms of assembly, RNAP is composed of a core of 2 alpha, a beta and a beta' subunits. The core is associated with a delta subunit and one of several sigma factors.

Participates in both the initiation and recycling phases of transcription. In the presence of the delta subunit, RNAP displays an increased specificity of transcription, a decreased affinity for nucleic acids, and an increased efficiency of RNA synthesis because of enhanced recycling. The protein is Probable DNA-directed RNA polymerase subunit delta of Listeria welshimeri serovar 6b (strain ATCC 35897 / DSM 20650 / CCUG 15529 / CIP 8149 / NCTC 11857 / SLCC 5334 / V8).